A 312-amino-acid chain; its full sequence is MAEITAALVKELREKSGVGMMDCKKALAENNGDIEASIDWLRAKGLSKAAKKADRAAAEGLVAIATAEQGAGETATAVEVNAETDFVSRNDLFQGAARQIAGAALGTDGSVDAITAAKLAGGETVQDHLTNLIATIGENMMVRRAAKWTVENGVVASYIHNATAPDLGRIGVLVAVESTGDKAALRELGRKIAMHVAATSPLSLSPDDLDPAAIEREKAVFTEQALESGKPAAVVEKMIEGRIRKFLEEVVLLKQAFVMNPDQTVEQLVAETAKTLGAPVAVKGFTRLALGEGVEKKQDDFAAEVASMTGQA.

The involved in Mg(2+) ion dislocation from EF-Tu stretch occupies residues Thr-84–Val-87.

This sequence belongs to the EF-Ts family.

Its subcellular location is the cytoplasm. Associates with the EF-Tu.GDP complex and induces the exchange of GDP to GTP. It remains bound to the aminoacyl-tRNA.EF-Tu.GTP complex up to the GTP hydrolysis stage on the ribosome. This chain is Elongation factor Ts, found in Caulobacter vibrioides (strain ATCC 19089 / CIP 103742 / CB 15) (Caulobacter crescentus).